The following is a 255-amino-acid chain: DNA repair protein RecO (255 aa).

It belongs to the RecO family.

Involved in DNA repair and RecF pathway recombination. The sequence is that of DNA repair protein RecO from Acidithiobacillus ferrooxidans (strain ATCC 23270 / DSM 14882 / CIP 104768 / NCIMB 8455) (Ferrobacillus ferrooxidans (strain ATCC 23270)).